We begin with the raw amino-acid sequence, 129 residues long: uncharacterized protein (129 aa).

Residues 86 to 96 (NDGFSSDDEPE) are compositionally biased toward acidic residues. Positions 86–116 (NDGFSSDDEPEEHVILTEDNQGEPSETPQAT) are disordered. Positions 103 to 116 (EDNQGEPSETPQAT) are enriched in polar residues.

This sequence belongs to the asfivirus D129L family.

This is an uncharacterized protein from African swine fever virus (strain Badajoz 1971 Vero-adapted) (Ba71V).